The chain runs to 1616 residues: Putative inactive phenolphthiocerol synthesis polyketide synthase type I Pks1 (1616 aa).

Positions 83–397 (TVVVFPGQGA…GQVFTTGVPV (315 aa)) are acyltransferase. The active-site For acyltransferase activity is the S174. The N-terminal hotdog fold stretch occupies residues 445-567 (HALLGAVVER…GMLGVAAAET (123 aa)). Residues 445–605 (HALLGAVVER…YAYGPAFQGL (161 aa)) are dehydratase. In terms of domain architecture, PKS/mFAS DH spans 445–719 (HALLGAVVER…TRPITAEQLR (275 aa)). The active-site Proton acceptor; for dehydratase activity is H477. The C-terminal hotdog fold stretch occupies residues 579–719 (AESVDISDGY…TRPITAEQLR (141 aa)). D640 (proton donor; for dehydratase activity) is an active-site residue. Positions 910 to 1215 (GTLEDLVIQP…QARHIGKVVL (306 aa)) are enoylreductase. NADP(+) is bound by residues 1040–1057 (VLIH…VQLA) and 1229–1244 (TVVI…GVLA). The segment at 1228-1409 (GTVVITGATG…SLAWGLWEQP (182 aa)) is beta-ketoacyl reductase. Positions 1514–1589 (ELLVGLVCLQ…AVAEYVAQQM (76 aa)) constitute a Carrier domain. S1549 is subject to O-(pantetheine 4'-phosphoryl)serine. Polar residues predominate over residues 1588-1604 (QMSGSRPTESGDPTSQV). The disordered stretch occupies residues 1588 to 1616 (QMSGSRPTESGDPTSQVVEPAAAEVSVHA).

It depends on pantetheine 4'-phosphate as a cofactor.

Its pathway is lipid metabolism; fatty acid biosynthesis. Functionally, may play a role in phthiocerol biosynthesis. The protein is Putative inactive phenolphthiocerol synthesis polyketide synthase type I Pks1 (pks1) of Mycobacterium tuberculosis (strain ATCC 25618 / H37Rv).